We begin with the raw amino-acid sequence, 351 residues long: Outer membrane protein A (351 aa).

The N-terminal stretch at Met-1–Ala-21 is a signal peptide. The next 8 beta stranded transmembrane spans lie at Thr-27–Ser-37, Gln-55–Val-66, Val-70–Trp-78, Gln-96–Pro-107, Leu-112–Gly-120, Pro-147–Ala-156, Ile-161–Gln-168, and Leu-187–Arg-195. 4 consecutive repeat copies span residues Ala-206–Pro-207, Ala-208–Pro-209, Ala-210–Pro-211, and Ala-212–Pro-213. The segment at Ala-206–Pro-213 is 4 X 2 AA tandem repeats of A-P. The 129-residue stretch at Val-215–Lys-343 folds into the OmpA-like domain. Residues Cys-316 and Cys-328 are joined by a disulfide bond.

This sequence belongs to the outer membrane OOP (TC 1.B.6) superfamily. OmpA family. As to quaternary structure, monomer and homodimer.

Its subcellular location is the cell outer membrane. Functionally, with TolR probably plays a role in maintaining the position of the peptidoglycan cell wall in the periplasm. Acts as a porin with low permeability that allows slow penetration of small solutes; an internal gate slows down solute passage. Required for conjugation with F-type plasmids; probably serves as the mating receptor on recipient cells. This is Outer membrane protein A from Shigella dysenteriae.